Reading from the N-terminus, the 64-residue chain is Large ribosomal subunit protein bL32 (64 aa).

It belongs to the bacterial ribosomal protein bL32 family.

This is Large ribosomal subunit protein bL32 from Bifidobacterium longum (strain DJO10A).